A 178-amino-acid polypeptide reads, in one-letter code: Female-specific protein transformer (178 aa).

Basic and acidic residues-rich tracts occupy residues 1 to 18 (MKMDADSSCGADHRDSHG) and 25 to 40 (REREQHGRTSNRDSKK). Residues 1 to 117 (MKMDADSSCG…RRYNPPPKII (117 aa)) form a disordered region. Basic residues-rich tracts occupy residues 59–73 (RRLRKRSPRSTRRSA) and 81–108 (RRHRHRSRSRNRSRSRSSERRRRQRSPR).

The protein localises to the nucleus speckle. Member of the regulatory pathway controlling female somatic sexual differentiation, regulated by Sxl. Activates dsx female-specific splicing by promoting the formation of a splicing enhancer complex which consists of tra, tra2 and sr proteins. The chain is Female-specific protein transformer (tra) from Drosophila erecta (Fruit fly).